Here is a 131-residue protein sequence, read N- to C-terminus: Large ribosomal subunit protein bL19 (131 aa).

It belongs to the bacterial ribosomal protein bL19 family.

In terms of biological role, this protein is located at the 30S-50S ribosomal subunit interface and may play a role in the structure and function of the aminoacyl-tRNA binding site. This is Large ribosomal subunit protein bL19 from Synechococcus sp. (strain CC9902).